Consider the following 205-residue polypeptide: MDTLLVAADSALRTLFARPRAGEPSPARSLPAVDLSVEQRRLSSALMRVNHVGEVCAQGLYMAQSCVTRDPQLRSDLLAAAREETDHLAWTRERLDALGSRPSLLNPLWFAGAFAIGLVAARVSDQASLGFVVETERQVSAHLQGHLRRLPEADLPSRAIVDRMQRDEERHAAQAQAAGALPLPPPARWLMKAAAKVMTTTAHHI.

6 residues coordinate Fe cation: glutamate 54, glutamate 84, histidine 87, glutamate 136, glutamate 168, and histidine 171.

It belongs to the COQ7 family. Requires Fe cation as cofactor.

It localises to the cell membrane. It carries out the reaction a 5-methoxy-2-methyl-3-(all-trans-polyprenyl)benzene-1,4-diol + AH2 + O2 = a 3-demethylubiquinol + A + H2O. Its pathway is cofactor biosynthesis; ubiquinone biosynthesis. In terms of biological role, catalyzes the hydroxylation of 2-nonaprenyl-3-methyl-6-methoxy-1,4-benzoquinol during ubiquinone biosynthesis. The polypeptide is 3-demethoxyubiquinol 3-hydroxylase (Acidovorax sp. (strain JS42)).